Here is a 180-residue protein sequence, read N- to C-terminus: Beta-lactoglobulin (180 aa).

Residues Met-1–Ala-18 form the signal peptide. Intrachain disulfides connect Cys-84-Cys-178, Cys-124-Cys-137, and Cys-124-Cys-139.

This sequence belongs to the calycin superfamily. Lipocalin family. Under physiological conditions beta-lactoglobulin exists as an equilibrium mixture of monomeric and dimeric forms. Interaction with LMBR1L is controversial. In terms of processing, alternate disulfide bonds occur in equal amounts. Synthesized in mammary gland and secreted in milk.

It localises to the secreted. Its function is as follows. Primary component of whey, it binds retinol and is probably involved in the transport of that molecule. The sequence is that of Beta-lactoglobulin (LGB) from Bubalus bubalis (Domestic water buffalo).